The sequence spans 165 residues: MESGDYDVETKREKLKSVLSQLLADPILADVPRNPTLSDVVTLVSLEKGSAMRLSVVKLDGSSLDVAVMNSATLKDLKLLIKKKVNEMEQANMGHRHISWKHVWSNFCLSCNNEKLLDDNAVLQDVGIRNNSQVTFMPYVMKKGRGRHSKRKKHRLFRSLHKTSS.

The Ubiquitin-like domain maps to 52–137; sequence MRLSVVKLDG…IRNNSQVTFM (86 aa). A disordered region spans residues 145–165; sequence RGRHSKRKKHRLFRSLHKTSS.

As to quaternary structure, component of the U11/U12 snRNPs that are part of the U12-type spliceosome.

The protein resides in the nucleus. This chain is U11/U12 small nuclear ribonucleoprotein 25 kDa protein (SNRNP25), found in Arabidopsis thaliana (Mouse-ear cress).